The sequence spans 368 residues: Glutamate 5-kinase (368 aa).

Position 13 (lysine 13) interacts with ATP. Substrate-binding residues include serine 54, aspartate 141, and asparagine 153. 173 to 174 (SD) contacts ATP. The 78-residue stretch at 278 to 355 (KGSLRLDAGA…DEIPEILGYP (78 aa)) folds into the PUA domain.

Belongs to the glutamate 5-kinase family.

The protein localises to the cytoplasm. It carries out the reaction L-glutamate + ATP = L-glutamyl 5-phosphate + ADP. It participates in amino-acid biosynthesis; L-proline biosynthesis; L-glutamate 5-semialdehyde from L-glutamate: step 1/2. In terms of biological role, catalyzes the transfer of a phosphate group to glutamate to form L-glutamate 5-phosphate. The chain is Glutamate 5-kinase from Jannaschia sp. (strain CCS1).